Here is a 436-residue protein sequence, read N- to C-terminus: uncharacterized protein (436 aa).

Transmembrane regions (helical) follow at residues 38-58 (ILIFSQIFGGAGLGAGITVGA), 70-90 (VAGIPTALFTFGSAVAALLIG), 102-122 (LAGGFLIGGLGAIGVIIAALI), 125-145 (VALLFVSLLIYGAGMASNLQV), 160-180 (TAASMALVSTTLGAVVGPNLV), 197-217 (GPFIMSGAAFIIAGIILLIFL), 254-274 (IMVGAVIMILAQLIMTAIMTM), 291-311 (LVIGLHIAAMYLPSPLTGLLV), 319-339 (MAIASGATLLAAGLVAAIAPA), 342-362 (LSLLILALVLLGVGWNFGLLT), 383-403 (FDVLLALSGAAGGALSGMVVA), and 409-429 (ILSISGAVLSLLLIPVVIWYF).

This sequence belongs to the major facilitator superfamily.

It localises to the cell membrane. This is an uncharacterized protein from Bacillus subtilis (strain 168).